The chain runs to 191 residues: Orotate phosphoribosyltransferase (191 aa).

114–122 (EDVVTTGKS) contributes to the 5-phospho-alpha-D-ribose 1-diphosphate binding site. Residues Thr118 and Arg146 each coordinate orotate.

This sequence belongs to the purine/pyrimidine phosphoribosyltransferase family. PyrE subfamily. In terms of assembly, homodimer. Requires Mg(2+) as cofactor.

The catalysed reaction is orotidine 5'-phosphate + diphosphate = orotate + 5-phospho-alpha-D-ribose 1-diphosphate. The protein operates within pyrimidine metabolism; UMP biosynthesis via de novo pathway; UMP from orotate: step 1/2. In terms of biological role, catalyzes the transfer of a ribosyl phosphate group from 5-phosphoribose 1-diphosphate to orotate, leading to the formation of orotidine monophosphate (OMP). This is Orotate phosphoribosyltransferase from Clostridium botulinum (strain Langeland / NCTC 10281 / Type F).